The sequence spans 346 residues: Dihydroorotase (346 aa).

Zn(2+)-binding residues include histidine 13 and histidine 15. Substrate is bound by residues 15–17 (HLR) and asparagine 41. Lysine 99, histidine 136, and histidine 174 together coordinate Zn(2+). Lysine 99 is subject to N6-carboxylysine. Position 136 (histidine 136) interacts with substrate. Leucine 219 contacts substrate. A Zn(2+)-binding site is contributed by aspartate 247. Aspartate 247 is a catalytic residue. The substrate site is built by histidine 251 and alanine 263.

The protein belongs to the metallo-dependent hydrolases superfamily. DHOase family. Class II DHOase subfamily. As to quaternary structure, homodimer. Zn(2+) serves as cofactor.

The catalysed reaction is (S)-dihydroorotate + H2O = N-carbamoyl-L-aspartate + H(+). The protein operates within pyrimidine metabolism; UMP biosynthesis via de novo pathway; (S)-dihydroorotate from bicarbonate: step 3/3. Catalyzes the reversible cyclization of carbamoyl aspartate to dihydroorotate. This Rhizobium leguminosarum bv. trifolii (strain WSM2304) protein is Dihydroorotase.